A 305-amino-acid polypeptide reads, in one-letter code: Fumarylacetoacetate hydrolase domain-containing protein 2 homolog (305 aa).

Residues Glu-141, Glu-143, and Asp-172 each contribute to the a divalent metal cation site.

Belongs to the FAH family. The cofactor is Ca(2+). Requires Mg(2+) as cofactor.

Its function is as follows. May have hydrolase activity. This is Fumarylacetoacetate hydrolase domain-containing protein 2 homolog (fahd2) from Dictyostelium discoideum (Social amoeba).